A 319-amino-acid chain; its full sequence is Nuclear hormone receptor family member nhr-174 (319 aa).

Residues 7–81 constitute a DNA-binding region (nuclear receptor); sequence DPVCPVCEFP…AGMKRNLVRQ (75 aa). 2 consecutive NR C4-type zinc fingers follow at residues 10 to 31 and 47 to 63; these read CPVC…CGAC and CEKK…CRAC. The region spanning 130-319 is the NR LBD domain; that stretch reads EAEKDVSKIL…SMKKSRYLQF (190 aa).

It belongs to the nuclear hormone receptor family.

It localises to the nucleus. Orphan nuclear receptor. This is Nuclear hormone receptor family member nhr-174 (nhr-174) from Caenorhabditis elegans.